The sequence spans 336 residues: Sulfate/thiosulfate import ATP-binding protein CysA (336 aa).

Residues 3–233 (ITIENVSKSF…PASPFVMSFI (231 aa)) enclose the ABC transporter domain. An ATP-binding site is contributed by 35-42 (GPSGSGKS).

It belongs to the ABC transporter superfamily. Sulfate/tungstate importer (TC 3.A.1.6) family. The complex is composed of two ATP-binding proteins (CysA), two transmembrane proteins (CysT and CysW) and a solute-binding protein (CysP).

The protein resides in the cell inner membrane. The catalysed reaction is sulfate(out) + ATP + H2O = sulfate(in) + ADP + phosphate + H(+). The enzyme catalyses thiosulfate(out) + ATP + H2O = thiosulfate(in) + ADP + phosphate + H(+). In terms of biological role, part of the ABC transporter complex CysAWTP involved in sulfate/thiosulfate import. Responsible for energy coupling to the transport system. This chain is Sulfate/thiosulfate import ATP-binding protein CysA, found in Thermosynechococcus vestitus (strain NIES-2133 / IAM M-273 / BP-1).